Consider the following 200-residue polypeptide: Probable nicotinate-nucleotide adenylyltransferase (200 aa).

Belongs to the NadD family.

It carries out the reaction nicotinate beta-D-ribonucleotide + ATP + H(+) = deamido-NAD(+) + diphosphate. Its pathway is cofactor biosynthesis; NAD(+) biosynthesis; deamido-NAD(+) from nicotinate D-ribonucleotide: step 1/1. Functionally, catalyzes the reversible adenylation of nicotinate mononucleotide (NaMN) to nicotinic acid adenine dinucleotide (NaAD). The polypeptide is Probable nicotinate-nucleotide adenylyltransferase (Clostridium tetani (strain Massachusetts / E88)).